A 145-amino-acid chain; its full sequence is Large ribosomal subunit protein bL19 (145 aa).

Over residues Ile-114–Ala-136 the composition is skewed to basic and acidic residues. Positions Ile-114 to Glu-145 are disordered.

Belongs to the bacterial ribosomal protein bL19 family.

Functionally, this protein is located at the 30S-50S ribosomal subunit interface and may play a role in the structure and function of the aminoacyl-tRNA binding site. In Methylocella silvestris (strain DSM 15510 / CIP 108128 / LMG 27833 / NCIMB 13906 / BL2), this protein is Large ribosomal subunit protein bL19.